The sequence spans 244 residues: MSSQDVLIHSDDPCHPANLICTLCKQFFHNNWCTGTGGGISIKDPNTNYYYLAPSGVQKEKMIPEDLFVMDAQTLEYLRSPKLYKPSACTPLFLACYQKKNAGAIIHTHSQNAVICSLLFGDEFRIANIEQIKAIPSGKVDPVTKKPMALSFFDTLKIPIIENMAHEDELIDDLHKTFKDYPDTCAVIVRRHGIFVWGPTIDKAKIFNEAIDYLMELAIKMYQMGIPPDCGIGEEKKHLKMASP.

Cys-89 is a binding site for substrate. Residues His-107 and His-109 each contribute to the Zn(2+) site. Catalysis depends on Glu-130, which acts as the Proton donor/acceptor. His-192 contributes to the Zn(2+) binding site.

The protein belongs to the aldolase class II family. MtnB subfamily. It depends on Zn(2+) as a cofactor.

The protein resides in the cytoplasm. It catalyses the reaction 5-(methylsulfanyl)-D-ribulose 1-phosphate = 5-methylsulfanyl-2,3-dioxopentyl phosphate + H2O. The protein operates within amino-acid biosynthesis; L-methionine biosynthesis via salvage pathway; L-methionine from S-methyl-5-thio-alpha-D-ribose 1-phosphate: step 2/6. Catalyzes the dehydration of methylthioribulose-1-phosphate (MTRu-1-P) into 2,3-diketo-5-methylthiopentyl-1-phosphate (DK-MTP-1-P). This chain is Methylthioribulose-1-phosphate dehydratase, found in Saccharomyces cerevisiae (strain ATCC 204508 / S288c) (Baker's yeast).